Consider the following 123-residue polypeptide: Galanin peptides (123 aa).

A signal peptide spans Met-1–Ser-19. Residues Ala-20–Glu-30 constitute a propeptide that is removed on maturation. The tract at residues His-46–Ser-80 is disordered. The span at Ser-62–Lys-73 shows a compositional bias: basic and acidic residues. Residues Ser-116 and Ser-117 each carry the phosphoserine modification.

Belongs to the galanin family.

The protein localises to the secreted. Functionally, endocrine hormone of the central and peripheral nervous systems that binds and activates the G protein-coupled receptors GALR1, GALR2, and GALR3. This small neuropeptide may regulate diverse physiologic functions including contraction of smooth muscle of the gastrointestinal and genitourinary tract, growth hormone and insulin release and adrenal secretion. In Homo sapiens (Human), this protein is Galanin peptides (GAL).